A 543-amino-acid chain; its full sequence is Ipecac alkaloid beta-glucosidase 2 (543 aa).

A beta-D-glucoside contacts are provided by residues Q36, H140, 185–186, Y350, E422, W471, and F487; that span reads NE. The active-site Proton donor is E186. Catalysis depends on E422, which acts as the Nucleophile.

Belongs to the glycosyl hydrolase 1 family.

It is found in the cytoplasm. It localises to the cytosol. It carries out the reaction deacetylipecoside + H2O = deacetylipecoside aglycone + D-glucose. The enzyme catalyses deacetylisoipecoside + H2O = deacetylisoipecoside aglycone + D-glucose. Its pathway is alkaloid biosynthesis. Its function is as follows. Beta-glucosidase catalyzing deglucosylation on N-deacetylisoipecoside and N-deacetylipecoside. This chain is Ipecac alkaloid beta-glucosidase 2, found in Carapichea ipecacuanha (Ipecac).